Consider the following 497-residue polypeptide: Probable malate:quinone oxidoreductase (497 aa).

It belongs to the MQO family. FAD is required as a cofactor.

It catalyses the reaction (S)-malate + a quinone = a quinol + oxaloacetate. The protein operates within carbohydrate metabolism; tricarboxylic acid cycle; oxaloacetate from (S)-malate (quinone route): step 1/1. The chain is Probable malate:quinone oxidoreductase from Flavobacterium johnsoniae (strain ATCC 17061 / DSM 2064 / JCM 8514 / BCRC 14874 / CCUG 350202 / NBRC 14942 / NCIMB 11054 / UW101) (Cytophaga johnsonae).